Reading from the N-terminus, the 255-residue chain is Lactose phosphotransferase system repressor (255 aa).

The region spanning Lys-3–Leu-58 is the HTH deoR-type domain. Positions Ile-20–Asp-39 form a DNA-binding region, H-T-H motif.

Functionally, repressor of the lactose catabolism operon. Galactose-6-phosphate is the inducer. The protein is Lactose phosphotransferase system repressor (lacR) of Lactococcus lactis subsp. lactis (Streptococcus lactis).